The following is a 598-amino-acid chain: Urease subunit alpha (598 aa).

Residues 136-598 (GGLDTHVHWL…APLAQRYFLF (463 aa)) form the Urease domain. The Ni(2+) site is built by H141, H143, and K223. At K223 the chain carries N6-carboxylysine. Residue H225 participates in substrate binding. Positions 252 and 278 each coordinate Ni(2+). H326 serves as the catalytic Proton donor. A Ni(2+)-binding site is contributed by D366.

This sequence belongs to the metallo-dependent hydrolases superfamily. Urease alpha subunit family. Heterotrimer of UreA (gamma), UreB (beta) and UreC (alpha) subunits. Three heterotrimers associate to form the active enzyme. Ni cation is required as a cofactor. Carboxylation allows a single lysine to coordinate two nickel ions.

The protein localises to the cytoplasm. It carries out the reaction urea + 2 H2O + H(+) = hydrogencarbonate + 2 NH4(+). It participates in nitrogen metabolism; urea degradation; CO(2) and NH(3) from urea (urease route): step 1/1. The protein is Urease subunit alpha of Ureaplasma urealyticum serovar 10 (strain ATCC 33699 / Western).